We begin with the raw amino-acid sequence, 124 residues long: Late histone H2B.2.1 (124 aa).

The interval 1-32 is disordered; sequence MPAKQTSGKGAKKAGKAKGRPAGASKTRRRKR. Residues 10 to 19 are compositionally biased toward basic residues; that stretch reads GAKKAGKAKG. Ser111 carries O-linked (GlcNAc) serine glycosylation. Residue Lys119 forms a Glycyl lysine isopeptide (Lys-Gly) (interchain with G-Cter in ubiquitin) linkage.

It belongs to the histone H2B family. As to quaternary structure, the nucleosome is a histone octamer containing two molecules each of H2A, H2B, H3 and H4 assembled in one H3-H4 heterotetramer and two H2A-H2B heterodimers. The octamer wraps approximately 147 bp of DNA. Post-translationally, monoubiquitination of Lys-119 gives a specific tag for epigenetic transcriptional activation and is also prerequisite for histone H3 'Lys-4' and 'Lys-79' methylation. In terms of processing, glcNAcylation at Ser-111 promotes monoubiquitination of Lys-119. It fluctuates in response to extracellular glucose, and associates with transcribed genes.

Its subcellular location is the nucleus. The protein localises to the chromosome. Core component of nucleosome. Nucleosomes wrap and compact DNA into chromatin, limiting DNA accessibility to the cellular machineries which require DNA as a template. Histones thereby play a central role in transcription regulation, DNA repair, DNA replication and chromosomal stability. DNA accessibility is regulated via a complex set of post-translational modifications of histones, also called histone code, and nucleosome remodeling. The sequence is that of Late histone H2B.2.1 from Psammechinus miliaris (Green sea urchin).